The sequence spans 194 residues: MKIKSVELVKTIYKSNDKYPESLNGEFVFVGRSNVGKSTLLNILTGRNIAKTSKKPGKTASINFYKINNSFYFVDLPGYGYAKVSVEERARWRKIIENYFSKRAWNIKLVFVLIDGRHELQKNDEILLEWLKELELDFAIVMTKMDKLKNSERAKMIRYYKDLYGENYTIIPYSAITREGIDKIYELIEIFGGV.

An EngB-type G domain is found at 23 to 194 (LNGEFVFVGR…YELIEIFGGV (172 aa)). GTP-binding positions include 31 to 38 (GRSNVGKS), 57 to 61 (GKTAS), 75 to 78 (DLPG), 143 to 146 (TKMD), and 173 to 175 (YSA). Residues Ser38 and Thr59 each coordinate Mg(2+).

Belongs to the TRAFAC class TrmE-Era-EngA-EngB-Septin-like GTPase superfamily. EngB GTPase family. It depends on Mg(2+) as a cofactor.

Necessary for normal cell division and for the maintenance of normal septation. This Thermosipho africanus (strain TCF52B) protein is Probable GTP-binding protein EngB.